The following is a 213-amino-acid chain: Cysteine dioxygenase (213 aa).

The Fe cation site is built by His100, His102, and His160. A cross-link (3'-(S-cysteinyl)-tyrosine (Cys-Tyr)) is located at residues 107–177 (CVMKVLKGSL…TNFAISLHLY (71 aa)).

Belongs to the cysteine dioxygenase family. Requires Fe cation as cofactor. In terms of processing, the thioether cross-link between Cys-107 and Tyr-177 plays a structural role through stabilizing the Fe(2+) ion, and prevents the production of highly damaging free hydroxyl radicals by holding the oxygen radical via hydroxyl hydrogen.

The enzyme catalyses L-cysteine + O2 = 3-sulfino-L-alanine + H(+). This chain is Cysteine dioxygenase (CDO1), found in Ajellomyces capsulatus (strain G186AR / H82 / ATCC MYA-2454 / RMSCC 2432) (Darling's disease fungus).